A 194-amino-acid polypeptide reads, in one-letter code: Peptidyl-tRNA hydrolase (194 aa).

A tRNA-binding site is contributed by tyrosine 17. Histidine 22 functions as the Proton acceptor in the catalytic mechanism. Residues phenylalanine 68, asparagine 70, and asparagine 116 each coordinate tRNA.

This sequence belongs to the PTH family. Monomer.

Its subcellular location is the cytoplasm. The catalysed reaction is an N-acyl-L-alpha-aminoacyl-tRNA + H2O = an N-acyl-L-amino acid + a tRNA + H(+). Functionally, hydrolyzes ribosome-free peptidyl-tRNAs (with 1 or more amino acids incorporated), which drop off the ribosome during protein synthesis, or as a result of ribosome stalling. Catalyzes the release of premature peptidyl moieties from peptidyl-tRNA molecules trapped in stalled 50S ribosomal subunits, and thus maintains levels of free tRNAs and 50S ribosomes. This Shewanella halifaxensis (strain HAW-EB4) protein is Peptidyl-tRNA hydrolase.